We begin with the raw amino-acid sequence, 560 residues long: MNNNIINLIAAVVLSLSIIFGWQYFFVKPEQKKQQQRIAMHKSENLNKQKLKALAEPASDIAVQEASQVQRIKIESESLTGSIALKGLRFDDLILKKYKQDLSQNSPAVRLFSPANTENAYFAEIGLVSNLNSVKLPNSNTVWNSDSEVLSPEKPVNLFWINEDGIKFLVTITVDKNYLFTIEQTIINNSDKELPVQSYGLINRKYISLEKAVNILHQGPIGCIDENLKEYSYDDIKDKKSTKFALSKVDWIGITDKYWLSSLIPDKSSRYSSNFNYALKQGTERYQVDFISPVQVIKPGENLSIKSRIFAGAKKVDLLDEYEKSYDIKLFDRAIDFGWFYIITKPVFYAMNFFYGYVGNFGISILIVTVIIKLLMFTLANKSYRSMKKMKNLQPEIDRIKNLYNNDKARLNQEIMALYKKEKVNPVAGCLPILVQIPVFFSIYKVLYVTIEMRQAPFFGWIKDLSSPDPTTIFNLFGLLPFAPPSFLMIGAWPILMAITMFLHQKMSPELADPIQAQVMKFMPLIFLFMFSSFPVGLLIYWSWNNILSIIQQYYINKFN.

Helical transmembrane passes span 5-25 (IINLIAAVVLSLSIIFGWQYF), 334-354 (AIDFGWFYIITKPVFYAMNFF), 357-377 (YVGNFGISILIVTVIIKLLMF), 431-451 (LPILVQIPVFFSIYKVLYVTI), 476-496 (LFGLLPFAPPSFLMIGAWPIL), and 522-542 (FMPLIFLFMFSSFPVGLLIYW).

This sequence belongs to the OXA1/ALB3/YidC family. Type 1 subfamily. As to quaternary structure, interacts with the Sec translocase complex via SecD. Specifically interacts with transmembrane segments of nascent integral membrane proteins during membrane integration.

It is found in the cell inner membrane. In terms of biological role, required for the insertion and/or proper folding and/or complex formation of integral membrane proteins into the membrane. Involved in integration of membrane proteins that insert both dependently and independently of the Sec translocase complex, as well as at least some lipoproteins. Aids folding of multispanning membrane proteins. This chain is Membrane protein insertase YidC, found in Rickettsia prowazekii (strain Madrid E).